The primary structure comprises 470 residues: Uronate isomerase (470 aa).

It belongs to the metallo-dependent hydrolases superfamily. Uronate isomerase family.

It carries out the reaction D-glucuronate = D-fructuronate. It catalyses the reaction aldehydo-D-galacturonate = keto-D-tagaturonate. The protein operates within carbohydrate metabolism; pentose and glucuronate interconversion. The sequence is that of Uronate isomerase from Serratia proteamaculans (strain 568).